The following is a 290-amino-acid chain: Nucleoid occlusion protein (290 aa).

Positions 153-172 (EALAQRLGKGQSTIANKLRL) form a DNA-binding region, H-T-H motif.

It belongs to the ParB family.

The protein localises to the cytoplasm. It is found in the nucleoid. Functionally, effects nucleoid occlusion by binding relatively nonspecifically to DNA and preventing the assembly of the division machinery in the vicinity of the nucleoid, especially under conditions that disturb the cell cycle. It helps to coordinate cell division and chromosome segregation by preventing the formation of the Z ring through the nucleoid, which would cause chromosome breakage. The sequence is that of Nucleoid occlusion protein from Bacillus cytotoxicus (strain DSM 22905 / CIP 110041 / 391-98 / NVH 391-98).